The sequence spans 435 residues: Eukaryotic translation initiation factor 3 subunit E (435 aa).

The 174-residue stretch at 219 to 392 (FFNHAKGRDL…GHVVMGTQPL (174 aa)) folds into the PCI domain.

It belongs to the eIF-3 subunit E family. As to quaternary structure, component of the eukaryotic translation initiation factor 3 (eIF-3) complex.

Its subcellular location is the cytoplasm. In terms of biological role, component of the eukaryotic translation initiation factor 3 (eIF-3) complex, which is involved in protein synthesis of a specialized repertoire of mRNAs and, together with other initiation factors, stimulates binding of mRNA and methionyl-tRNAi to the 40S ribosome. The eIF-3 complex specifically targets and initiates translation of a subset of mRNAs involved in cell proliferation. The polypeptide is Eukaryotic translation initiation factor 3 subunit E (eIF3-S6) (Culex quinquefasciatus (Southern house mosquito)).